Reading from the N-terminus, the 315-residue chain is MFAFICLLAIASAIDFNTWASKNNKHFTAIEKLRRRAIFNMNAKFVDSFNKIGSFKLSVDGPFAAMTNEEYRTLLKSKRTTEENGQVKYLNIQAPESVDWRKEGKVTPIRDQAQCGSCYTFGSLAALEGRLLIEKGGDANTLDLSEEHMVQCTRDNGNNGCNGGLGSNVYDYIIEHGVAKESDYPYTGSDSTCKTNVKSFAKITGYTKVPRNNEAELKAALSQGLVDVSIDASSAKFQLYKSGAYTDTKCKNNYFALNHEVCAVGYGVVDGKECWIVRNSWGTGWGDKGYINMVIEGNTCGVATDPLYPTGVQYL.

The first 13 residues, 1-13 (MFAFICLLAIASA), serve as a signal peptide directing secretion. The propeptide at 14–93 (IDFNTWASKN…NGQVKYLNIQ (80 aa)) is activation peptide. 2 cysteine pairs are disulfide-bonded: Cys115-Cys161 and Cys152-Cys193. The active site involves Cys118. Active-site residues include His259 and Asn279.

Belongs to the peptidase C1 family. As to quaternary structure, interacts with cysteine protease inhibitor ICP1. Interacts with cysteine protease inhibitor ICP2.

It is found in the cell membrane. It localises to the cytoplasmic vesicle. The protein resides in the phagosome. Its subcellular location is the secreted. The catalysed reaction is Hydrolysis of proteins, including basement membrane collagen and azocasein. Preferential cleavage: Arg-Arg-|-Xaa in small molecule substrates including Z-Arg-Arg-|-NHMec.. Its activity is regulated as follows. Inhibited by cysteine protease inhibitors ICP1 and ICP2. Inhibited by leupeptin and such inhibitors of cysteine proteinases as L-transepoxysuccinyl-L-leucylamido-(4-guanidino)butane, peptidyldiazomethanes, iodoacetic acid and chicken cystatin. Functionally, cysteine protease which degrades matrix proteins such as collagen, laminin and fibronectin and thus is involved in the destruction of human tissue. Can abolish adhesion. May play an important role in pathogenicity. In Entamoeba histolytica (strain ATCC 30459 / HM-1:IMSS / ABRM), this protein is Cysteine proteinase 2.